Consider the following 43-residue polypeptide: TVKTKDRSLSAQYEHTIVVTDNGCEILTLRKDDTIPAIISHNE.

The protein belongs to the peptidase M24A family. Methionine aminopeptidase type 1 subfamily. In terms of assembly, monomer. Co(2+) is required as a cofactor. The cofactor is Zn(2+). It depends on Mn(2+) as a cofactor. Fe(2+) serves as cofactor.

The enzyme catalyses Release of N-terminal amino acids, preferentially methionine, from peptides and arylamides.. Functionally, removes the N-terminal methionine from nascent proteins. The N-terminal methionine is often cleaved when the second residue in the primary sequence is small and uncharged (Met-Ala-, Cys, Gly, Pro, Ser, Thr, or Val). Requires deformylation of the N(alpha)-formylated initiator methionine before it can be hydrolyzed. This Klebsiella oxytoca protein is Methionine aminopeptidase (map).